The following is an 821-amino-acid chain: Protein SCAR1 (821 aa).

3 disordered regions span residues 168 to 189, 205 to 289, and 577 to 625; these read KRASRASKPSEIKKKKSIQRGR, TCTS…RGSS, and TSLP…RESK. Residues 206–225 show a composition bias toward polar residues; the sequence is CTSLSFSGRTSTSKTASTIE. Basic and acidic residues predominate over residues 226-250; that stretch reads IESKSDLQEHRSFSFDSRSGGEKPK. Over residues 252–265 the composition is skewed to polar residues; that stretch reads VSSSSRFTPGSRTI. Positions 592-612 are enriched in low complexity; the sequence is SSSYISDNSDNDNRSVSMSEQ. Positions 756–774 constitute a WH2 domain; sequence EAGDFLHQIRTKQFNLRRV. The interval 802-821 is disordered; it reads QAVASDDGEGESDTWSDSDT. The span at 807–821 shows a compositional bias: acidic residues; that stretch reads DDGEGESDTWSDSDT.

It belongs to the SCAR/WAVE family. Binds BRK1 and actin. Interacts with SPK1, ABI1 and ABI2. Expressed in expanding cotyledons, expanding leaves and expanding siliques containing developing embryos. Detected in unopened flower buds and in the expanding tip region of roots. Reduced expression in mature leaves and mature cotyledons.

The protein localises to the cytoplasm. Its subcellular location is the cytoskeleton. Functionally, involved in regulation of actin and microtubule organization. Part of a WAVE complex that activates the Arp2/3 complex. Regulates trichome branch positioning and expansion. The chain is Protein SCAR1 (SCAR1) from Arabidopsis thaliana (Mouse-ear cress).